Reading from the N-terminus, the 45-residue chain is Somatoliberin (45 aa).

Belongs to the glucagon family.

It localises to the secreted. GRF is released by the hypothalamus and acts on the adenohypophyse to stimulate the secretion of growth hormone. This is Somatoliberin (ghrh) from Cyprinus carpio (Common carp).